The primary structure comprises 718 residues: DNA ligase (718 aa).

NAD(+) contacts are provided by residues 44–48 (DADYD), 93–94 (SL), and Glu127. Lys129 serves as the catalytic N6-AMP-lysine intermediate. Residues Arg150, Glu186, Lys302, and Lys326 each contribute to the NAD(+) site. The Zn(2+) site is built by Cys432, Cys435, Cys456, and Cys462. Residues 640 to 718 (TAGSPVAGKT…EDQWLALISG (79 aa)) form the BRCT domain.

It belongs to the NAD-dependent DNA ligase family. LigA subfamily. Mg(2+) serves as cofactor. The cofactor is Mn(2+).

It carries out the reaction NAD(+) + (deoxyribonucleotide)n-3'-hydroxyl + 5'-phospho-(deoxyribonucleotide)m = (deoxyribonucleotide)n+m + AMP + beta-nicotinamide D-nucleotide.. DNA ligase that catalyzes the formation of phosphodiester linkages between 5'-phosphoryl and 3'-hydroxyl groups in double-stranded DNA using NAD as a coenzyme and as the energy source for the reaction. It is essential for DNA replication and repair of damaged DNA. This chain is DNA ligase, found in Rhizobium johnstonii (strain DSM 114642 / LMG 32736 / 3841) (Rhizobium leguminosarum bv. viciae).